We begin with the raw amino-acid sequence, 404 residues long: DNA gyrase subunit B (404 aa).

The Toprim domain maps to 321–404 (SEIYIVEGDS…VIIMTDADVD (84 aa)). The Mg(2+) site is built by Glu-327, Asp-400, and Asp-402.

This sequence belongs to the type II topoisomerase GyrB family. In terms of assembly, heterotetramer, composed of two GyrA and two GyrB chains. In the heterotetramer, GyrA contains the active site tyrosine that forms a transient covalent intermediate with DNA, while GyrB binds cofactors and catalyzes ATP hydrolysis. Requires Mg(2+) as cofactor. Mn(2+) is required as a cofactor. The cofactor is Ca(2+).

Its subcellular location is the cytoplasm. It carries out the reaction ATP-dependent breakage, passage and rejoining of double-stranded DNA.. A type II topoisomerase that negatively supercoils closed circular double-stranded (ds) DNA in an ATP-dependent manner to modulate DNA topology and maintain chromosomes in an underwound state. Negative supercoiling favors strand separation, and DNA replication, transcription, recombination and repair, all of which involve strand separation. Also able to catalyze the interconversion of other topological isomers of dsDNA rings, including catenanes and knotted rings. Type II topoisomerases break and join 2 DNA strands simultaneously in an ATP-dependent manner. The protein is DNA gyrase subunit B (gyrB) of Bacillus cereus.